Reading from the N-terminus, the 715-residue chain is Coiled-coil domain-containing protein 13 (715 aa).

Coiled-coil stretches lie at residues 16–105 (KAMQ…KERD) and 134–458 (ATKI…NVHY). Residues 20–65 (EMQHKRLQKQMEKKREKELSLKSRADDQEEPLEVSDGLSLLHAGEP) form a disordered region. The span at 28-45 (KQMEKKREKELSLKSRAD) shows a compositional bias: basic and acidic residues. 3 positions are modified to phosphoserine: Ser-258, Ser-469, and Ser-536. Disordered regions lie at residues 482–541 (EDPG…EQKG) and 607–645 (LEPGKASASQRAAPRTKTGLPTSNNRHNPTGSEKKDPSF). Residues 554–608 (QAAEVERDRLTEFVTVLQKRVEESNSKLLESERKLQEERHRTVVLEQHLEKIRLE) are a coiled coil. The span at 625 to 637 (GLPTSNNRHNPTG) shows a compositional bias: polar residues. Residues 653-683 (VESQMEELTTRLAIQVEENEMLKAALGSALR) are a coiled coil.

As to quaternary structure, interacts with PCM1, CEP290 and PCNT.

The protein resides in the cytoplasm. It localises to the cytoskeleton. The protein localises to the microtubule organizing center. It is found in the centrosome. Its subcellular location is the centriolar satellite. The protein resides in the cilium basal body. In terms of biological role, required for primary cilia formation and promotes the localization of the ciliopathy protein BBS4 to both centriolar satellites and cilia. The chain is Coiled-coil domain-containing protein 13 from Homo sapiens (Human).